Here is a 384-residue protein sequence, read N- to C-terminus: Protein NDRG1 (384 aa).

Ser2 is modified (N-acetylserine). Residues Ser2, Ser319, and Ser326 each carry the phosphoserine modification. Residues 325–384 (RSRTASGSSVTSLEGARSRSHTSEGTRSRSHTSEGTRLDIIPNSGGPGSSAGPNSTEVSC) form a disordered region. Residues 327–336 (RTASGSSVTS) show a composition bias toward polar residues. The residue at position 328 (Thr328) is a Phosphothreonine; by SGK1. Ser330 and Ser332 each carry phosphoserine; by SGK1. Ser333 bears the Phosphoserine mark. Phosphothreonine is present on Thr335. A phosphoserine mark is found at Ser336 and Ser342. Tandem repeats lie at residues 339-348 (GARSRSHTSE) and 349-358 (GTRSRSHTSE). The 2 X 10 AA tandem repeats of G-[PST]-R-S-R-S-H-T-S-E stretch occupies residues 339 to 358 (GARSRSHTSEGTRSRSHTSE). The segment covering 345–361 (HTSEGTRSRSHTSEGTR) has biased composition (basic and acidic residues). Thr346 is subject to Phosphothreonine; by SGK1. Phosphoserine is present on Ser352. Thr356 bears the Phosphothreonine; by SGK1 mark. The span at 374 to 384 (SAGPNSTEVSC) shows a compositional bias: low complexity.

Belongs to the NDRG family. As to quaternary structure, interacts with RAB4A (membrane-bound form); the interaction involves NDRG1 in vesicular recycling of CDH1. Interacts with APOA1, APOA2, PRA1 and RTN1. Post-translationally, under stress conditions, phosphorylated in the C-terminal on many serine and threonine residues. Phosphorylated in vitro by PKA. Phosphorylation enhanced by increased intracellular cAMP levels. Homocysteine induces dephosphorylation. Phosphorylation by SGK1 is cell cycle dependent.

Its subcellular location is the cytoplasm. It is found in the cytosol. The protein localises to the cytoskeleton. It localises to the microtubule organizing center. The protein resides in the centrosome. Its subcellular location is the nucleus. It is found in the cell membrane. In terms of biological role, stress-responsive protein involved in hormone responses, cell growth, and differentiation. Acts as a tumor suppressor in many cell types. Necessary but not sufficient for p53/TP53-mediated caspase activation and apoptosis. Has a role in cell trafficking notably of the Schwann cell and is necessary for the maintenance and development of the peripheral nerve myelin sheath. Required for vesicular recycling of CDH1 and TF. May also function in lipid trafficking. Protects cells from spindle disruption damage. Functions in p53/TP53-dependent mitotic spindle checkpoint. Regulates microtubule dynamics and maintains euploidy. In Bos taurus (Bovine), this protein is Protein NDRG1 (NDRG1).